The sequence spans 249 residues: Probable endopeptidase YafL (249 aa).

A signal peptide spans 1–17 (MSLPSIPSFVLSGLLLI). A lipid anchor (N-palmitoyl cysteine) is attached at cysteine 18. Residue cysteine 18 is the site of S-diacylglycerol cysteine attachment. Residues 116–243 (HNITEVAIHR…DHFLGARRIL (128 aa)) enclose the NlpC/P60 domain. Cysteine 147 (nucleophile) is an active-site residue. Histidine 202 serves as the catalytic Proton acceptor. Residue glutamate 214 is part of the active site.

This sequence belongs to the peptidase C40 family.

The protein resides in the cell membrane. This chain is Probable endopeptidase YafL (yafL), found in Escherichia coli (strain K12).